A 128-amino-acid polypeptide reads, in one-letter code: Small ribosomal subunit protein uS11 (128 aa).

This sequence belongs to the universal ribosomal protein uS11 family. As to quaternary structure, part of the 30S ribosomal subunit. Interacts with proteins S7 and S18. Binds to IF-3.

Functionally, located on the platform of the 30S subunit, it bridges several disparate RNA helices of the 16S rRNA. Forms part of the Shine-Dalgarno cleft in the 70S ribosome. This is Small ribosomal subunit protein uS11 from Acinetobacter baylyi (strain ATCC 33305 / BD413 / ADP1).